Consider the following 132-residue polypeptide: Sec-independent protein translocase protein TatB (132 aa).

The chain crosses the membrane as a helical span at residues 2 to 22 (FDGIGFMELLLIGILGLVVLG). The disordered stretch occupies residues 68–132 (ENQGLKDLSP…VSANPDKSNR (65 aa)). A compositionally biased stretch (low complexity) spans 102–122 (TPSASSSAPSESTPSEAPTAE).

The protein belongs to the TatB family. In terms of assembly, the Tat system comprises two distinct complexes: a TatABC complex, containing multiple copies of TatA, TatB and TatC subunits, and a separate TatA complex, containing only TatA subunits. Substrates initially bind to the TatABC complex, which probably triggers association of the separate TatA complex to form the active translocon.

It is found in the cell inner membrane. Functionally, part of the twin-arginine translocation (Tat) system that transports large folded proteins containing a characteristic twin-arginine motif in their signal peptide across membranes. Together with TatC, TatB is part of a receptor directly interacting with Tat signal peptides. TatB may form an oligomeric binding site that transiently accommodates folded Tat precursor proteins before their translocation. The polypeptide is Sec-independent protein translocase protein TatB (Shewanella woodyi (strain ATCC 51908 / MS32)).